The sequence spans 727 residues: DNA topoisomerase 3 (727 aa).

The Toprim domain maps to 3 to 136; that stretch reads KTVVLAEKPS…IKRLWISSVT (134 aa). Mg(2+) contacts are provided by Glu9 and Asp105. Positions 153–593 constitute a Topo IA-type catalytic domain; the sequence is YENLYHSAVA…DMKAYAHQTV (441 aa). Residues 187 to 192 are interaction with DNA; it reads SCGRVQ. The active-site O-(5'-phospho-DNA)-tyrosine intermediate is Tyr310. Over residues 685 to 699 the composition is skewed to basic and acidic residues; sequence KRKNKDKARATKRDV. Positions 685–714 are disordered; the sequence is KRKNKDKARATKRDVSSYMKKQNKDEPINN.

The protein belongs to the type IA topoisomerase family. The cofactor is Mg(2+).

It carries out the reaction ATP-independent breakage of single-stranded DNA, followed by passage and rejoining.. In terms of biological role, releases the supercoiling and torsional tension of DNA, which is introduced during the DNA replication and transcription, by transiently cleaving and rejoining one strand of the DNA duplex. Introduces a single-strand break via transesterification at a target site in duplex DNA. The scissile phosphodiester is attacked by the catalytic tyrosine of the enzyme, resulting in the formation of a DNA-(5'-phosphotyrosyl)-enzyme intermediate and the expulsion of a 3'-OH DNA strand. The free DNA strand then undergoes passage around the unbroken strand, thus removing DNA supercoils. Finally, in the religation step, the DNA 3'-OH attacks the covalent intermediate to expel the active-site tyrosine and restore the DNA phosphodiester backbone. This chain is DNA topoisomerase 3, found in Bacillus subtilis (strain 168).